The following is a 373-amino-acid chain: MANKDYYEVLGLQKGASDDEIKKAFRKLAIKYHPDKNKGNTEAEEKFKEINEAYQVLSDPEKKSNYDQFGSADFNGGGFGSGGFGGFDMGGFGDIFDMFTGGGSSTRRRNGPVNGNDIEYTLTLTFEEAVFGVEKEITVNRSESCEHCNGSGAEPGTSKKTCPTCSGTGQVRVQRQTPLGSFVSTSTCDRCSGTGNIIEKPCTHCRGNGNVRKTRKINVNIPAGVDTGNVMPLRGQGEHGLRGGSPGDLYIRINVSPSKEFTRKGNDIYIDTHISMAKAALGTEITVKTVEGNVKYTVPEGTQSGTLFRLKGKGVARVNSTGKGDQYVRVIVDIPKGLNQKQKEALYTFMEACGEEMDENTHSFKKNLFGRKK.

Residues 5–70 form the J domain; that stretch reads DYYEVLGLQK…EKKSNYDQFG (66 aa). Residues 132–214 form a CR-type zinc finger; that stretch reads GVEKEITVNR…CRGNGNVRKT (83 aa). 8 residues coordinate Zn(2+): C145, C148, C162, C165, C188, C191, C202, and C205. CXXCXGXG motif repeat units follow at residues 145–152, 162–169, 188–195, and 202–209; these read CEHCNGSG, CPTCSGTG, CDRCSGTG, and CTHCRGNG.

Belongs to the DnaJ family. Homodimer. Zn(2+) serves as cofactor.

It is found in the cytoplasm. Participates actively in the response to hyperosmotic and heat shock by preventing the aggregation of stress-denatured proteins and by disaggregating proteins, also in an autonomous, DnaK-independent fashion. Unfolded proteins bind initially to DnaJ; upon interaction with the DnaJ-bound protein, DnaK hydrolyzes its bound ATP, resulting in the formation of a stable complex. GrpE releases ADP from DnaK; ATP binding to DnaK triggers the release of the substrate protein, thus completing the reaction cycle. Several rounds of ATP-dependent interactions between DnaJ, DnaK and GrpE are required for fully efficient folding. Also involved, together with DnaK and GrpE, in the DNA replication of plasmids through activation of initiation proteins. The protein is Chaperone protein DnaJ of Clostridium botulinum (strain Alaska E43 / Type E3).